Consider the following 331-residue polypeptide: Protein-methionine-sulfoxide reductase catalytic subunit MsrP (331 aa).

A signal peptide (tat-type signal) is located at residues 1–57 (MLIKKTLRAALAGDDIPRSEITPRAVFEHRRRILQAAGAAAAGGLVGAHGLALAAYA). Mo-molybdopterin contacts are provided by residues Asn90, 93–94 (YE), Cys148, Thr183, Asn231, Arg236, and 247–249 (SAK).

The protein belongs to the MsrP family. In terms of assembly, heterodimer of a catalytic subunit (MsrP) and a heme-binding subunit (MsrQ). The cofactor is Mo-molybdopterin. In terms of processing, predicted to be exported by the Tat system. The position of the signal peptide cleavage has not been experimentally proven.

The protein localises to the periplasm. The catalysed reaction is L-methionyl-[protein] + a quinone + H2O = L-methionyl-(S)-S-oxide-[protein] + a quinol. It carries out the reaction L-methionyl-[protein] + a quinone + H2O = L-methionyl-(R)-S-oxide-[protein] + a quinol. Functionally, part of the MsrPQ system that repairs oxidized periplasmic proteins containing methionine sulfoxide residues (Met-O), using respiratory chain electrons. Thus protects these proteins from oxidative-stress damage caused by reactive species of oxygen and chlorine generated by the host defense mechanisms. MsrPQ is essential for the maintenance of envelope integrity under bleach stress, rescuing a wide series of structurally unrelated periplasmic proteins from methionine oxidation. The catalytic subunit MsrP is non-stereospecific, being able to reduce both (R-) and (S-) diastereoisomers of methionine sulfoxide. The polypeptide is Protein-methionine-sulfoxide reductase catalytic subunit MsrP (Burkholderia mallei (strain ATCC 23344)).